The sequence spans 38 residues: Large ribosomal subunit protein bL36 (38 aa).

It belongs to the bacterial ribosomal protein bL36 family.

This is Large ribosomal subunit protein bL36 from Flavobacterium psychrophilum (strain ATCC 49511 / DSM 21280 / CIP 103535 / JIP02/86).